A 305-amino-acid polypeptide reads, in one-letter code: Phosphoribosylaminoimidazole-succinocarboxamide synthase (305 aa).

The protein belongs to the SAICAR synthetase family.

The enzyme catalyses 5-amino-1-(5-phospho-D-ribosyl)imidazole-4-carboxylate + L-aspartate + ATP = (2S)-2-[5-amino-1-(5-phospho-beta-D-ribosyl)imidazole-4-carboxamido]succinate + ADP + phosphate + 2 H(+). The protein operates within purine metabolism; IMP biosynthesis via de novo pathway; 5-amino-1-(5-phospho-D-ribosyl)imidazole-4-carboxamide from 5-amino-1-(5-phospho-D-ribosyl)imidazole-4-carboxylate: step 1/2. The protein is Phosphoribosylaminoimidazole-succinocarboxamide synthase of Polaromonas naphthalenivorans (strain CJ2).